A 63-amino-acid chain; its full sequence is Potassium channel toxin alpha-KTx 21.1 (63 aa).

The signal sequence occupies residues 1–27 (MQFSGVVLILISMTLVNFVFFETKVEA). 3 disulfide bridges follow: Cys-33-Cys-53, Cys-38-Cys-58, and Cys-42-Cys-60.

This sequence belongs to the short scorpion toxin superfamily. Potassium channel inhibitor family. Alpha-KTx 21 subfamily. In terms of tissue distribution, expressed by the venom gland.

Its subcellular location is the secreted. Reversibly and voltage-independently blocks voltage-gated potassium channels rKv1.2/KCNA2 (73%) (IC(50)=196 nM), hKv1.3/KCNA3 (50%) (IC(50)=508 nM), Shaker IR (30%), rKv1.6/KCNA6 (22%) (at 0.5 uM). Interaction of Ts15 with Kv1.3/KCNA3 is stronger than its interaction with Kv1.2/KCNA2. In Tityus serrulatus (Brazilian scorpion), this protein is Potassium channel toxin alpha-KTx 21.1.